The primary structure comprises 610 residues: Probable galacturonosyltransferase 5 (610 aa).

At 1-6 (MNQVRR) the chain is on the cytoplasmic side. A helical; Signal-anchor for type II membrane protein transmembrane segment spans residues 7–27 (WQRILILSLLLLSVLAPIVFV). The Lumenal segment spans residues 28–610 (SNRLKSITSV…PHLQRCNIHD (583 aa)). Residues 86-101 (LSNSSDKSNDTVQSNE) are compositionally biased toward polar residues. The disordered stretch occupies residues 86–170 (LSNSSDKSND…KNTRVQLERA (85 aa)). Residues Asn-88 and Asn-94 are each glycosylated (N-linked (GlcNAc...) asparagine). A compositionally biased stretch (basic and acidic residues) spans 110–123 (EVDKGNNHKPKEEQ). A compositionally biased stretch (polar residues) spans 124-135 (AVSQKTTVSSNA). Positions 139–170 (ISARDIQLNHKTEFRPPSSKSEKNTRVQLERA) are enriched in basic and acidic residues. 4 N-linked (GlcNAc...) asparagine glycosylation sites follow: Asn-196, Asn-338, Asn-401, and Asn-475.

The protein belongs to the glycosyltransferase 8 family. As to expression, expressed in roots, inflorescences, siliques, leaves and stems.

The protein resides in the golgi apparatus membrane. It functions in the pathway glycan metabolism; pectin biosynthesis. Its function is as follows. May be involved in pectin and/or xylans biosynthesis in cell walls. The chain is Probable galacturonosyltransferase 5 (GAUT5) from Arabidopsis thaliana (Mouse-ear cress).